The chain runs to 331 residues: tRNA-modifying protein YgfZ (331 aa).

The folate site is built by Trp-28 and Trp-191.

This sequence belongs to the tRNA-modifying YgfZ family.

It is found in the cytoplasm. Functionally, folate-binding protein involved in regulating the level of ATP-DnaA and in the modification of some tRNAs. It is probably a key factor in regulatory networks that act via tRNA modification, such as initiation of chromosomal replication. The protein is tRNA-modifying protein YgfZ of Edwardsiella ictaluri (strain 93-146).